Here is a 122-residue protein sequence, read N- to C-terminus: Histone H2B subacrosomal variant (122 aa).

A compositionally biased stretch (basic residues) spans 1–25 (MARNVTKRNKRCRGHQKAIYKKKSH). The disordered stretch occupies residues 1 to 30 (MARNVTKRNKRCRGHQKAIYKKKSHSSSES).

Belongs to the histone H2B family. In terms of tissue distribution, testis-specific. Restricted to the spermatid population of seminiferous epithelium. Not present in Sertoli cells, spermatogonia, spermatocytes or cells of the interstitial tissue (at protein level).

It localises to the cytoplasm. Its function is as follows. May act as an acrosome-nuclear docking protein in sperm. In Bos taurus (Bovine), this protein is Histone H2B subacrosomal variant (SUBH2BV).